The sequence spans 374 residues: Alginate lyase (374 aa).

An N-terminal signal peptide occupies residues 1–23 (MHKTRLALSCLLGSLLLSGAVHA). Residues 62 to 63 (SK), 135 to 136 (HT), and Tyr253 each bind substrate.

It belongs to the polysaccharide lyase 5 family.

Its subcellular location is the periplasm. The enzyme catalyses Eliminative cleavage of alginate to give oligosaccharides with 4-deoxy-alpha-L-erythro-hex-4-enuronosyl groups at their non-reducing ends and beta-D-mannuronate at their reducing end.. Functionally, catalyzes the depolymerization of alginate by cleaving the beta-1,4 glycosidic bond between two adjacent sugar residues via a beta-elimination mechanism. May serve to degrade mislocalized alginate that is trapped in the periplasmic space. The chain is Alginate lyase from Azotobacter vinelandii (strain DJ / ATCC BAA-1303).